The chain runs to 951 residues: Valine--tRNA ligase (951 aa).

The short motif at 42–52 (PNVTGSLHMGH) is the 'HIGH' region element. Residues 554–558 (KMSKS) carry the 'KMSKS' region motif. Lys557 serves as a coordination point for ATP. Residues 880 to 944 (AGLINKEDEL…AEAKAKLIEQ (65 aa)) adopt a coiled-coil conformation.

The protein belongs to the class-I aminoacyl-tRNA synthetase family. ValS type 1 subfamily. Monomer.

It is found in the cytoplasm. It catalyses the reaction tRNA(Val) + L-valine + ATP = L-valyl-tRNA(Val) + AMP + diphosphate. Its function is as follows. Catalyzes the attachment of valine to tRNA(Val). As ValRS can inadvertently accommodate and process structurally similar amino acids such as threonine, to avoid such errors, it has a 'posttransfer' editing activity that hydrolyzes mischarged Thr-tRNA(Val) in a tRNA-dependent manner. The protein is Valine--tRNA ligase of Shigella boydii serotype 4 (strain Sb227).